Consider the following 89-residue polypeptide: Small ribosomal subunit protein uS14 (89 aa).

Belongs to the universal ribosomal protein uS14 family. Part of the 30S ribosomal subunit. Contacts proteins S3 and S10.

In terms of biological role, binds 16S rRNA, required for the assembly of 30S particles and may also be responsible for determining the conformation of the 16S rRNA at the A site. In Azobacteroides pseudotrichonymphae genomovar. CFP2, this protein is Small ribosomal subunit protein uS14.